The chain runs to 497 residues: Beta-glucosidase 8 (497 aa).

The signal sequence occupies residues 1-22 (MKHFNLLSIILVIVLATSYIDA). Q42 is a binding site for a beta-D-glucoside. A glycan (N-linked (GlcNAc...) asparagine) is linked at N65. A beta-D-glucoside contacts are provided by residues H139 and 184 to 185 (NE). E185 (proton donor) is an active-site residue. N202 carries N-linked (GlcNAc...) asparagine glycosylation. Y319 is a binding site for a beta-D-glucoside. N-linked (GlcNAc...) asparagine glycosylation occurs at N354. Residues E387, W430, and F446 each coordinate a beta-D-glucoside. The Nucleophile role is filled by E387. N-linked (GlcNAc...) asparagine glycosylation is found at N452, N474, and N490.

Belongs to the glycosyl hydrolase 1 family.

The catalysed reaction is Hydrolysis of terminal, non-reducing beta-D-glucosyl residues with release of beta-D-glucose.. The chain is Beta-glucosidase 8 from Arabidopsis thaliana (Mouse-ear cress).